Consider the following 442-residue polypeptide: ATP-dependent protease ATPase subunit HslU (442 aa).

Residues I18, 60-65, D255, E320, and R392 each bind ATP; that span reads GVGKTE.

This sequence belongs to the ClpX chaperone family. HslU subfamily. A double ring-shaped homohexamer of HslV is capped on each side by a ring-shaped HslU homohexamer. The assembly of the HslU/HslV complex is dependent on binding of ATP.

The protein resides in the cytoplasm. ATPase subunit of a proteasome-like degradation complex; this subunit has chaperone activity. The binding of ATP and its subsequent hydrolysis by HslU are essential for unfolding of protein substrates subsequently hydrolyzed by HslV. HslU recognizes the N-terminal part of its protein substrates and unfolds these before they are guided to HslV for hydrolysis. This is ATP-dependent protease ATPase subunit HslU from Shewanella sp. (strain W3-18-1).